The primary structure comprises 288 residues: ATP synthase gamma chain (288 aa).

This sequence belongs to the ATPase gamma chain family. In terms of assembly, F-type ATPases have 2 components, CF(1) - the catalytic core - and CF(0) - the membrane proton channel. CF(1) has five subunits: alpha(3), beta(3), gamma(1), delta(1), epsilon(1). CF(0) has three main subunits: a, b and c.

The protein localises to the cell inner membrane. Functionally, produces ATP from ADP in the presence of a proton gradient across the membrane. The gamma chain is believed to be important in regulating ATPase activity and the flow of protons through the CF(0) complex. The protein is ATP synthase gamma chain of Rickettsia bellii (strain RML369-C).